Consider the following 171-residue polypeptide: 3-hydroxydecanoyl-[acyl-carrier-protein] dehydratase (171 aa).

The active site involves histidine 70.

This sequence belongs to the thioester dehydratase family. FabA subfamily. Homodimer.

The protein localises to the cytoplasm. It catalyses the reaction a (3R)-hydroxyacyl-[ACP] = a (2E)-enoyl-[ACP] + H2O. It carries out the reaction (3R)-hydroxydecanoyl-[ACP] = (2E)-decenoyl-[ACP] + H2O. The catalysed reaction is (2E)-decenoyl-[ACP] = (3Z)-decenoyl-[ACP]. It participates in lipid metabolism; fatty acid biosynthesis. Necessary for the introduction of cis unsaturation into fatty acids. Catalyzes the dehydration of (3R)-3-hydroxydecanoyl-ACP to E-(2)-decenoyl-ACP and then its isomerization to Z-(3)-decenoyl-ACP. Can catalyze the dehydratase reaction for beta-hydroxyacyl-ACPs with saturated chain lengths up to 16:0, being most active on intermediate chain length. This chain is 3-hydroxydecanoyl-[acyl-carrier-protein] dehydratase, found in Methylobacillus flagellatus (strain ATCC 51484 / DSM 6875 / VKM B-1610 / KT).